The sequence spans 122 residues: Large ribosomal subunit protein uL14c (122 aa).

This sequence belongs to the universal ribosomal protein uL14 family. Part of the 50S ribosomal subunit.

The protein resides in the plastid. It is found in the chloroplast. Its function is as follows. Binds to 23S rRNA. This is Large ribosomal subunit protein uL14c from Drimys granadensis.